We begin with the raw amino-acid sequence, 354 residues long: Thiamine thiazole synthase 2, chloroplastic (354 aa).

The transit peptide at Met1–Arg44 directs the protein to the chloroplast. The disordered stretch occupies residues Ser17–Ser49. The segment covering Pro20–Ala32 has biased composition (polar residues). Residues Ala97, Glu117–Gln118, Gly125, and Val190 contribute to the substrate site. Position 219 is a 2,3-didehydroalanine (Cys) (Cys219). Residues Asp221, His236, Met288, and Arg298 to Gly300 each bind substrate.

It belongs to the THI4 family. Homooctamer. Fe cation is required as a cofactor. Post-translationally, during the catalytic reaction, a sulfide is transferred from Cys-219 to a reaction intermediate, generating a dehydroalanine residue. Highest expression in developing embryos and green leaves and a very low level expression seen in endosperm, roots, etiolated shoots and immature ears.

The protein resides in the plastid. Its subcellular location is the chloroplast. The enzyme catalyses [ADP-thiazole synthase]-L-cysteine + glycine + NAD(+) = [ADP-thiazole synthase]-dehydroalanine + ADP-5-ethyl-4-methylthiazole-2-carboxylate + nicotinamide + 3 H2O + 2 H(+). In terms of biological role, involved in biosynthesis of the thiamine precursor thiazole. Catalyzes the conversion of NAD and glycine to adenosine diphosphate 5-(2-hydroxyethyl)-4-methylthiazole-2-carboxylic acid (ADT), an adenylated thiazole intermediate. The reaction includes an iron-dependent sulfide transfer from a conserved cysteine residue of the protein to a thiazole intermediate. The enzyme can only undergo a single turnover, which suggests it is a suicide enzyme. May have additional roles in adaptation to various stress conditions and in DNA damage tolerance. This chain is Thiamine thiazole synthase 2, chloroplastic, found in Zea mays (Maize).